A 487-amino-acid polypeptide reads, in one-letter code: Serine/threonine-protein kinase 4 (487 aa).

Met1 carries the post-translational modification N-acetylmethionine. Thr3 bears the Phosphothreonine mark. One can recognise a Protein kinase domain in the interval 30–281; that stretch reads FDVLEKLGEG…ATQLLQHPFV (252 aa). ATP is bound by residues 36-44 and Lys59; that span reads LGEGSYGSV. Asp149 (proton acceptor) is an active-site residue. Thr183 bears the Phosphothreonine; by autocatalysis mark. At Ser265 the chain carries Phosphoserine. Residues 290-310 are a coiled coil; the sequence is LRDLINEAMDVKLKRQESQQR. Residues 303-312 show a composition bias toward basic and acidic residues; the sequence is KRQESQQREV. The tract at residues 303–332 is disordered; the sequence is KRQESQQREVDQDDEENSEEDEMDSGTMVR. The span at 313–326 shows a compositional bias: acidic residues; it reads DQDDEENSEEDEMD. Ser320 carries the post-translational modification Phosphoserine. Thr340 and Thr367 each carry phosphothreonine. Position 387 is a phosphothreonine; by PKB/AKT1 (Thr387). A phosphoserine mark is found at Ser410 and Ser414. Phosphotyrosine is present on Tyr433. One can recognise an SARAH domain in the interval 433–480; it reads YEFLKSWTVEDLQKRLLALDPMMEQEIEEIRQKYQSKRQPILDAIEAK.

Belongs to the protein kinase superfamily. STE Ser/Thr protein kinase family. STE20 subfamily. In terms of assembly, homodimer; mediated via the coiled-coil region. Interacts with NORE1, which inhibits autoactivation. Interacts with and stabilizes SAV1. Interacts with RASSF1. Interacts with FOXO3. Interacts with RASSF2 (via SARAH domain). Interacts with AR, PKB/AKT1, TNNI3 and SIRT1. Interacts with DLG5 (via PDZ domain 3). Interacts with MARK3 and SCRIB in the presence of DLG5. Requires Mg(2+) as cofactor. In terms of processing, autophosphorylated on serine and threonine residues. Phosphorylation at Thr-387 by PKB/AKT1, leads to inhibition of its: kinase activity, nuclear translocation and autophosphorylation at Thr-183. It also diminishes its cleavage by caspases and its ability to phosphorylate FOXO3. Post-translationally, proteolytically cleaved by caspase-3 during apoptosis at Asp-326 and Asp-349 resulting in a 37 kDa or a 39 kDa subunit respectively. The 39 kDa subunit is further cleaved into the 37 kDa form. Proteolytic cleavage results in kinase activation and nuclear translocation of the truncated form (MST1/N). It is less likely that cleavage at Asp-349 is a prerequisite for activation as this site is not conserved in the murine ortholog.

It localises to the cytoplasm. The protein localises to the nucleus. The enzyme catalyses L-seryl-[protein] + ATP = O-phospho-L-seryl-[protein] + ADP + H(+). It catalyses the reaction L-threonyl-[protein] + ATP = O-phospho-L-threonyl-[protein] + ADP + H(+). With respect to regulation, inhibited by the C-terminal non-catalytic region. Activated by caspase-cleavage. Full activation also requires homodimerization and autophosphorylation of Thr-183. Activated by RASSF1 which acts by preventing its dephosphorylation. Its function is as follows. Stress-activated, pro-apoptotic kinase which, following caspase-cleavage, enters the nucleus and induces chromatin condensation followed by internucleosomal DNA fragmentation. Key component of the Hippo signaling pathway which plays a pivotal role in organ size control and tumor suppression by restricting proliferation and promoting apoptosis. The core of this pathway is composed of a kinase cascade wherein STK3/MST2 and STK4/MST1, in complex with its regulatory protein SAV1, phosphorylates and activates LATS1/2 in complex with its regulatory protein MOB1, which in turn phosphorylates and inactivates YAP1 oncoprotein and WWTR1/TAZ. Phosphorylation of YAP1 by LATS2 inhibits its translocation into the nucleus to regulate cellular genes important for cell proliferation, cell death, and cell migration. STK3/MST2 and STK4/MST1 are required to repress proliferation of mature hepatocytes, to prevent activation of facultative adult liver stem cells (oval cells), and to inhibit tumor formation. Phosphorylates 'Ser-14' of histone H2B (H2BS14ph) during apoptosis. Phosphorylates FOXO3 upon oxidative stress, which results in its nuclear translocation and cell death initiation. Phosphorylates MOBKL1A, MOBKL1B and RASSF2. Phosphorylates TNNI3 (cardiac Tn-I) and alters its binding affinity to TNNC1 (cardiac Tn-C) and TNNT2 (cardiac Tn-T). Phosphorylates FOXO1 on 'Ser-212' and regulates its activation and stimulates transcription of PMAIP1 in a FOXO1-dependent manner. Phosphorylates SIRT1 and inhibits SIRT1-mediated p53/TP53 deacetylation, thereby promoting p53/TP53 dependent transcription and apoptosis upon DNA damage. Acts as an inhibitor of PKB/AKT1. Phosphorylates AR on 'Ser-650' and suppresses its activity by intersecting with PKB/AKT1 signaling and antagonizing formation of AR-chromatin complexes. The polypeptide is Serine/threonine-protein kinase 4 (STK4) (Macaca mulatta (Rhesus macaque)).